Consider the following 1052-residue polypeptide: RIMS-binding protein 2 (1052 aa).

The segment at 115 to 164 (GEYIRPLPQPGDRPEPLSAKPTFLSRSGSARCRSESDMENERNSNTSKQR) is disordered. Basic and acidic residues predominate over residues 146–156 (CRSESDMENER). Residues 167–234 (GKVHLCVARY…PSNFVDFVQD (68 aa)) form the SH3 1 domain. Fibronectin type-III domains are found at residues 297 to 390 (VPYP…GKDV), 393 to 475 (APSH…KKEA), and 489 to 590 (PPQD…VPPT). 5 disordered regions span residues 584-615 (ELLV…DEHL), 629-666 (RAPG…PVST), 697-716 (SAGQ…PDFK), 767-787 (EMQL…NALK), and 805-829 (FPRG…YGRD). The segment covering 585-598 (LLVPPTPHPRPAPQ) has biased composition (pro residues). The segment covering 645–654 (PGRRSPSPSR) has biased composition (low complexity). Phosphoserine occurs at positions 704 and 712. Serine 832 and serine 839 each carry phosphoserine. Threonine 841 is subject to Phosphothreonine. SH3 domains lie at 848 to 916 (LPAR…EIQA) and 952 to 1019 (VSTR…EVPD). The tract at residues 1029 to 1052 (PSHYSQDTPMRSKAKRKKSVHFTP) is disordered. Positions 1040–1052 (SKAKRKKSVHFTP) are enriched in basic residues.

This sequence belongs to the RIMBP family. In terms of assembly, interacts with RIMS1, RIMS2, CACNA1D and CACNA1B, and potentially with other Ca(2+) channel alpha-1 isoforms.

The protein localises to the cell membrane. It is found in the synapse. Functionally, plays a role in the synaptic transmission as bifunctional linker that interacts simultaneously with RIMS1, RIMS2, CACNA1D and CACNA1B. This is RIMS-binding protein 2 (RIMBP2) from Homo sapiens (Human).